We begin with the raw amino-acid sequence, 419 residues long: Serine/threonine-protein kinase Kist (419 aa).

Positions 23–304 (WQVQSRLGSG…AEMALCSPFF (282 aa)) constitute a Protein kinase domain. ATP contacts are provided by residues 29-37 (LGSGSSASV) and lysine 54. Active-site proton acceptor residues include aspartate 141 and aspartate 158. Residues 324-406 (RLLNVLDDDY…KFVVATFYPL (83 aa)) form the RRM domain.

This sequence belongs to the protein kinase superfamily. Ser/Thr protein kinase family. Interacts with stathmin, PAM and CDKN1B/p27Kip1.

Its subcellular location is the nucleus. It catalyses the reaction L-seryl-[protein] + ATP = O-phospho-L-seryl-[protein] + ADP + H(+). The enzyme catalyses L-threonyl-[protein] + ATP = O-phospho-L-threonyl-[protein] + ADP + H(+). Functionally, upon serum stimulation, phosphorylates CDKN1B/p27Kip1, thus controlling CDKN1B subcellular location and cell cycle progression in G1 phase. May be involved in trafficking and/or processing of RNA. This chain is Serine/threonine-protein kinase Kist (UHMK1), found in Pongo abelii (Sumatran orangutan).